We begin with the raw amino-acid sequence, 128 residues long: UPF0102 protein MAV_3752 (128 aa).

The protein belongs to the UPF0102 family.

The chain is UPF0102 protein MAV_3752 from Mycobacterium avium (strain 104).